The following is a 331-amino-acid chain: Aspartate carbamoyltransferase catalytic subunit (331 aa).

Carbamoyl phosphate contacts are provided by Arg-62 and Thr-63. Residue Lys-90 participates in L-aspartate binding. Positions 112, 145, and 148 each coordinate carbamoyl phosphate. Positions 185 and 246 each coordinate L-aspartate. Carbamoyl phosphate is bound by residues Gly-287 and Pro-288.

Belongs to the aspartate/ornithine carbamoyltransferase superfamily. ATCase family. Heterododecamer (2C3:3R2) of six catalytic PyrB chains organized as two trimers (C3), and six regulatory PyrI chains organized as three dimers (R2).

It carries out the reaction carbamoyl phosphate + L-aspartate = N-carbamoyl-L-aspartate + phosphate + H(+). The protein operates within pyrimidine metabolism; UMP biosynthesis via de novo pathway; (S)-dihydroorotate from bicarbonate: step 2/3. Catalyzes the condensation of carbamoyl phosphate and aspartate to form carbamoyl aspartate and inorganic phosphate, the committed step in the de novo pyrimidine nucleotide biosynthesis pathway. This chain is Aspartate carbamoyltransferase catalytic subunit, found in Synechocystis sp. (strain ATCC 27184 / PCC 6803 / Kazusa).